Here is a 78-residue protein sequence, read N- to C-terminus: Large ribosomal subunit protein bL31 (78 aa).

4 residues coordinate Zn(2+): Cys-16, Cys-18, Cys-38, and Cys-41.

This sequence belongs to the bacterial ribosomal protein bL31 family. Type A subfamily. In terms of assembly, part of the 50S ribosomal subunit. It depends on Zn(2+) as a cofactor.

Functionally, binds the 23S rRNA. The chain is Large ribosomal subunit protein bL31 from Frankia alni (strain DSM 45986 / CECT 9034 / ACN14a).